Reading from the N-terminus, the 153-residue chain is uncharacterized protein (153 aa).

The signal sequence occupies residues 1 to 25 (MKKRQYLKSLYVALLGTLCYLSVNA).

This is an uncharacterized protein from Pasteurella multocida (strain Pm70).